A 510-amino-acid polypeptide reads, in one-letter code: Zinc finger protein 692 (510 aa).

2 disordered regions span residues 1–20 (MAASPADASRRRREKRRQLD) and 121–306 (WGPS…EDTA). S161 carries the post-translational modification Phosphoserine. Residues 163–172 (CDERAQEARM) are compositionally biased toward basic and acidic residues. A compositionally biased stretch (acidic residues) spans 188-201 (EDGEEEEEDEEEML). Position 225 is a phosphoserine (S225). The segment covering 237-265 (APAPAAVPAPLASPSSSASSLGSGAPGPV) has biased composition (low complexity). Polar residues predominate over residues 278 to 297 (QADQQTEPLASPGSQAQSAL). 5 C2H2-type zinc fingers span residues 322 to 347 (LPCDFPGCGRIFSNRQYLNHHKKYQH), 353 to 377 (FSCPEPACGKSFNFKKHLKEHVKLH), 383 to 405 (YICEFCARSFRTSSNLVIHRRIH), 411 to 433 (LQCEICGFTCRQKASLNWHRRKH), and 442 to 465 (FPCEFCGKRFEKPDSVAAHRSKSH). S464 is subject to Phosphoserine.

This sequence belongs to the krueppel C2H2-type zinc-finger protein family. Post-translationally, phosphorylation at Ser-464 results in loss of DNA-binding activity.

It localises to the nucleus. May act as an transcriptional repressor for PCK1 gene expression, in turn may participate in the hepatic gluconeogenesis regulation through the activated AMPK signaling pathway. This Bos taurus (Bovine) protein is Zinc finger protein 692.